The primary structure comprises 1325 residues: ATP-binding cassette sub-family C member 4 (1325 aa).

A run of 6 helical transmembrane segments spans residues 93 to 113, 136 to 156, 205 to 225, 227 to 247, 322 to 342, and 351 to 371; these read LILGIFTLIEEGTRVVQPLFL, GYAAVLSMCTLILAILHHLYF, FDQVTIFLHFLWAGPLQAIAV, VLLWVEIGISCLAGLAVLVIL, ASFFIANKVILFVTFTSYVLL, and VFVAMTLYGAVRLTVTLFFPS. The ABC transmembrane type-1 1 domain occupies 93–377; the sequence is LILGIFTLIE…FFPSAIERGS (285 aa). An ABC transporter 1 domain is found at 410–633; sequence VHVQDFTAFW…GVDFGSLLKK (224 aa). An ATP-binding site is contributed by 445–452; the sequence is GPVGAGKS. A phosphothreonine mark is found at Thr-646 and Thr-648. Positions 657 to 667 are enriched in polar residues; sequence ASIWSQQSSRP. Residues 657 to 690 form a disordered region; that stretch reads ASIWSQQSSRPSLKDGAPEGQDAENTQAVQPEES. 2 positions are modified to phosphoserine: Ser-664 and Ser-668. The next 5 membrane-spanning stretches (helical) occupy residues 710–730, 761–781, 849–869, 954–974, and 977–997; these read SWFFIIFLVLLNMVGQVFYVL, LSWYLGIYAGLTAVTVLFGIA, LVVSVIAVAAAVIPWILIPLV, AICAIFVIVVAFGSLVLAKTL, and GQVGLALSYALTLMGMFQWSV. The ABC transmembrane type-1 2 domain maps to 714–1005; sequence IIFLVLLNMV…SVRQSAEVEN (292 aa). The ABC transporter 2 domain occupies 1041-1274; that stretch reads IVFDNVNFTY…PESLFYKMVQ (234 aa). 1075–1082 serves as a coordination point for ATP; sequence GRTGAGKS. Residues 1322–1325 carry the PDZ-binding motif; it reads ETAL.

As to quaternary structure, interacts (via PDZ-binding motif) with SNX27 (via PDZ domain); this interaction accelerates MRP4 internalization. It depends on Mg(2+) as a cofactor. N-glycosylated; leading to substrate-selective effects on its transport activity.

It localises to the basolateral cell membrane. The protein localises to the apical cell membrane. It catalyses the reaction ATP + H2O + xenobioticSide 1 = ADP + phosphate + xenobioticSide 2.. It carries out the reaction an S-substituted glutathione(in) + ATP + H2O = an S-substituted glutathione(out) + ADP + phosphate + H(+). The enzyme catalyses 17beta-estradiol 17-O-(beta-D-glucuronate)(in) + ATP + H2O = 17beta-estradiol 17-O-(beta-D-glucuronate)(out) + ADP + phosphate + H(+). The catalysed reaction is dehydroepiandrosterone 3-sulfate(in) + ATP + H2O = dehydroepiandrosterone 3-sulfate(out) + ADP + phosphate + H(+). It catalyses the reaction leukotriene C4(in) + ATP + H2O = leukotriene C4(out) + ADP + phosphate + H(+). It carries out the reaction leukotriene B4(in) + ATP + H2O = leukotriene B4(out) + ADP + phosphate + H(+). The enzyme catalyses urate(in) + ATP + H2O = urate(out) + ADP + phosphate + H(+). The catalysed reaction is 3',5'-cyclic GMP(in) + ATP + H2O = 3',5'-cyclic GMP(out) + ADP + phosphate + H(+). It catalyses the reaction 3',5'-cyclic AMP(in) + ATP + H2O = 3',5'-cyclic AMP(out) + ADP + phosphate + H(+). It carries out the reaction prostaglandin E2(in) + ATP + H2O = prostaglandin E2(out) + ADP + phosphate + H(+). The enzyme catalyses prostaglandin E1(in) + ATP + H2O = prostaglandin E1(out) + ADP + phosphate + H(+). The catalysed reaction is glycodeoxycholate(in) + glutathione(in) + ATP + H2O = glycodeoxycholate(out) + glutathione(out) + ADP + phosphate + H(+). It catalyses the reaction cholate(in) + glutathione(in) + ATP + H2O = cholate(out) + glutathione(out) + ADP + phosphate + H(+). It carries out the reaction glycocholate(in) + glutathione(in) + ATP + H2O = glycocholate(out) + glutathione(out) + ADP + phosphate + H(+). The enzyme catalyses taurocholate(in) + glutathione(in) + ATP + H2O = taurocholate(out) + glutathione(out) + ADP + phosphate + H(+). The catalysed reaction is glycochenodeoxycholate(in) + glutathione(in) + ATP + H2O = glycochenodeoxycholate(out) + glutathione(out) + ADP + phosphate + H(+). It catalyses the reaction taurochenodeoxycholate(in) + glutathione(in) + ATP + H2O = taurochenodeoxycholate(out) + glutathione(out) + ADP + phosphate + H(+). It carries out the reaction glycoursodeoxycholate(in) + glutathione(in) + ATP + H2O = glycoursodeoxycholate(out) + glutathione(out) + ADP + phosphate + H(+). The enzyme catalyses tauroursodeoxycholate(in) + glutathione(in) + ATP + H2O = tauroursodeoxycholate(out) + glutathione(out) + ADP + phosphate + H(+). In terms of biological role, ATP-dependent transporter of the ATP-binding cassette (ABC) family that actively extrudes physiological compounds and xenobiotics from cells. Transports a range of endogenous molecules that have a key role in cellular communication and signaling, including cyclic nucleotides such as cyclic AMP (cAMP) and cyclic GMP (cGMP), bile acids, steroid conjugates, urate, and prostaglandins. Also mediates the ATP-dependent efflux of glutathione conjugates such as leukotriene C4 (LTC4) and leukotriene B4 (LTB4). The presence of GSH is necessary for the ATP-dependent transport of LTB4, whereas GSH is not required for the transport of LTC4. Mediates the cotransport of bile acids with reduced glutathione (GSH). Transports a wide range of drugs and their metabolites, including anticancer, antiviral and antibiotics molecules. Confers resistance to anticancer agents. The polypeptide is ATP-binding cassette sub-family C member 4 (Mus musculus (Mouse)).